The chain runs to 432 residues: Alcohol acyltransferase 9 (432 aa).

Active-site proton acceptor residues include histidine 156 and aspartate 379.

This sequence belongs to the plant acyltransferase family. In terms of tissue distribution, expressed in fruit.

It catalyses the reaction 2-(methylsulfanyl)acetyl-CoA + butan-1-ol = butyl 2-(methylsulfanyl)acetate + CoA. It carries out the reaction ethanol + acetyl-CoA = ethyl acetate + CoA. The enzyme catalyses butan-1-ol + acetyl-CoA = butyl acetate + CoA. The catalysed reaction is butan-1-ol + propanoyl-CoA = butyl propanoate + CoA. Functionally, involved in the biosynthesis of volatile esters which confer kiwifruit flavor. Alcohol acyl transferase that can use a wide range of alcohols as substrate to produce esters. Exhibits acetyl-CoA:alcohol O-acyltransferase activity. In Actinidia deliciosa (Kiwi), this protein is Alcohol acyltransferase 9.